The primary structure comprises 229 residues: uncharacterized protein (229 aa).

A signal peptide spans 1–17 (MKKIIALMLFLTFFAHA).

This is an uncharacterized protein from Escherichia coli O157:H7.